An 85-amino-acid polypeptide reads, in one-letter code: U4-theraphotoxin-Hhn1c (85 aa).

The N-terminal stretch at 1–22 (MKVTLIAILTCAAVLVLHTTAA) is a signal peptide. The propeptide occupies 23-48 (EELEAESQLMEVGMPDTELAAVDEER). Disulfide bonds link Cys-52/Cys-66, Cys-56/Cys-77, and Cys-71/Cys-82.

The protein belongs to the neurotoxin 12 (Hwtx-2) family. 02 (Hwtx-2) subfamily. Expressed by the venom gland.

The protein localises to the secreted. Postsynaptic neurotoxin. This is U4-theraphotoxin-Hhn1c from Cyriopagopus hainanus (Chinese bird spider).